Reading from the N-terminus, the 460-residue chain is Monocarboxylate transporter 12 (460 aa).

Topologically, residues 1-10 (MTQEKRSLHK) are cytoplasmic. The next 12 membrane-spanning stretches (helical) occupy residues 11-31 (TPPD…VTVC), 58-78 (AWIH…GSYV), 86-106 (VGII…SFAT), 115-135 (LGVL…AMVG), 148-168 (IAMS…QLLI), 177-197 (LLIL…MRPI), 246-266 (FIIL…PFVY), 282-302 (AFLM…FGWV), 329-349 (FLPI…FGYF), 354-374 (VALI…SSAL), 376-396 (VVFF…GWLV), and 406-426 (FLLS…AKII). The Cytoplasmic portion of the chain corresponds to 427 to 460 (NRIKKNPQATVVRSSDIKQEVWTNGDVSCLNAIS).

It belongs to the major facilitator superfamily. Monocarboxylate porter (TC 2.A.1.13) family.

It is found in the cell membrane. The protein localises to the basolateral cell membrane. The catalysed reaction is creatine(in) = creatine(out). The enzyme catalyses guanidinoacetate(in) = guanidinoacetate(out). Functionally, functions as a transporter for creatine and as well for its precursor guanidinoacetate. Transport of creatine and GAA is independent of resting membrane potential and extracellular Na(+), Cl(-), or pH. Contributes to the process of creatine biosynthesis and distribution. The polypeptide is Monocarboxylate transporter 12 (slc16a12) (Xenopus laevis (African clawed frog)).